Reading from the N-terminus, the 331-residue chain is 6-phosphogluconolactonase (331 aa).

The protein belongs to the cycloisomerase 2 family.

It catalyses the reaction 6-phospho-D-glucono-1,5-lactone + H2O = 6-phospho-D-gluconate + H(+). Its pathway is carbohydrate degradation; pentose phosphate pathway; D-ribulose 5-phosphate from D-glucose 6-phosphate (oxidative stage): step 2/3. In terms of biological role, catalyzes the hydrolysis of 6-phosphogluconolactone to 6-phosphogluconate. The chain is 6-phosphogluconolactonase from Klebsiella pneumoniae subsp. pneumoniae (strain ATCC 700721 / MGH 78578).